The following is a 305-amino-acid chain: MSVDPACPQSLPCFEESDCKESSPMPVICGPEENYPSLQMSSAEMPHTETVSPLPSSMDLLIQDSPDSSTSPKGKQPTSAENSVAKKEDKVPVKKQKTRTVFSSTQLCVLNDRFQRQKYLSLQQMQELSNILNLSYKQVKTWFQNQRMKSKRWQKNNWPKNSNGVTQKASAPTYPSLYSSYHQGCLVNPTGNLPMWSNQTWNNSTWSNQTQNIQSWSNHSWNTQTWCTQSWNNQAWNSPFYNCGEESLQSCMHFQPNSPASDLEAALEAAGEGLNVIQQTTRYFSTPQTMDLFLNYSMNMQPEDV.

Residues 1 to 96 (MSVDPACPQS…KEDKVPVKKQ (96 aa)) are disordered. Positions 65–82 (SPDSSTSPKGKQPTSAEN) are enriched in polar residues. Positions 95 to 154 (KQKTRTVFSSTQLCVLNDRFQRQKYLSLQQMQELSNILNLSYKQVKTWFQNQRMKSKRWQ) form a DNA-binding region, homeobox. 8 consecutive repeat copies span residues 196–200 (WSNQT), 201–205 (WNNST), 206–210 (WSNQT), 216–220 (WSNHS), 221–225 (WNTQT), 226–230 (WCTQS), 231–235 (WNNQA), and 236–240 (WNSPF). The 8 X repeats starting with a Trp in each unit stretch occupies residues 196–240 (WSNQTWNNSTWSNQTQNIQSWSNHSWNTQTWCTQSWNNQAWNSPF). Residues 196-240 (WSNQTWNNSTWSNQTQNIQSWSNHSWNTQTWCTQSWNNQAWNSPF) form a sufficient for transactivation activity region. The segment at 241–305 (YNCGEESLQS…YSMNMQPEDV (65 aa)) is sufficient for strong transactivation activity.

The protein belongs to the Nanog homeobox family.

Its subcellular location is the nucleus. Its function is as follows. May act as a transcription regulator. When overexpressed, promotes entry of cells into S phase and cell proliferation. The protein is Homeobox protein NANOGP8 (NANOGP8) of Homo sapiens (Human).